Consider the following 359-residue polypeptide: Type-1 angiotensin II receptor (359 aa).

Residues 1 to 25 (MILNSSTEDGIKRIQDDCPKAGRHS) lie on the Extracellular side of the membrane. Asn4 is a glycosylation site (N-linked (GlcNAc...) asparagine). 2 residues coordinate angiotensin II: Gln15 and Asp17. Disulfide bonds link Cys18/Cys274 and Cys101/Cys180. A helical transmembrane segment spans residues 26–55 (YIFVMIPTLYSIIFVVGIFGNSLVVIVIYF). The Cytoplasmic portion of the chain corresponds to 56-61 (YMKLKT). The helical transmembrane segment at 62–89 (VASVFLLNLALADICFLLTLPLWAVYTA) threads the bilayer. The Extracellular portion of the chain corresponds to 90–98 (MEYRWPFGN). A helical membrane pass occupies residues 99-125 (YLCKIASASVSFNLYASVFLLTCLSID). Over 126-141 (RYLAIVHPMKSRLRRT) the chain is Cytoplasmic. The chain crosses the membrane as a helical span at residues 142-165 (MLVAKVTCVIIWLMAGLASLPAVI). Topologically, residues 166 to 190 (HRNVFFIENTNITVCAFHYESQNST) are extracellular. Angiotensin II is bound at residue Arg167. Residue Asn176 is glycosylated (N-linked (GlcNAc...) asparagine). Angiotensin II contacts are provided by Phe182, His183, and Tyr184. A glycan (N-linked (GlcNAc...) asparagine) is linked at Asn188. Residues 191–216 (LPIGLGLTKNILGFMFPFLIILTSYT) traverse the membrane as a helical segment. Residue Lys199 participates in angiotensin II binding. The Cytoplasmic segment spans residues 217–239 (LIWKALKKAYEIQKNKPRNDDIF). The helical transmembrane segment at 240–268 (KIIMAIVLFFFFSWVPHQIFTFLDVLIQL) threads the bilayer. At 269–278 (GIIHDCKISD) the chain is on the extracellular side. The chain crosses the membrane as a helical span at residues 279–304 (IVDTAMPITICIAYFNNCLNPLFYGF). At 305-359 (LGKKFKKYFLQLLKYIPPKAKSHSTLSTKMSTLSYRPSDNVSSSAKKPVQCFEVE) the chain is on the cytoplasmic side. Over residues 337 to 349 (LSYRPSDNVSSSA) the composition is skewed to polar residues. The disordered stretch occupies residues 337 to 359 (LSYRPSDNVSSSAKKPVQCFEVE). A lipid anchor (S-palmitoyl cysteine) is attached at Cys355.

It belongs to the G-protein coupled receptor 1 family. In terms of assembly, interacts with MAS1. Interacts with ARRB1. Interacts with FLNA (via filamin repeat 21); increases PKA-mediated phosphorylation of FLNA. In terms of processing, C-terminal Ser or Thr residues may be phosphorylated. As to expression, expressed in liver, kidney, adrenal gland, heart and colon.

The protein localises to the cell membrane. Its function is as follows. Receptor for angiotensin II, a vasoconstricting peptide, which acts as a key regulator of blood pressure and sodium retention by the kidney. The activated receptor in turn couples to G-alpha proteins G(q) (GNAQ, GNA11, GNA14 or GNA15) and thus activates phospholipase C and increases the cytosolic Ca(2+) concentrations, which in turn triggers cellular responses such as stimulation of protein kinase C. This Cavia porcellus (Guinea pig) protein is Type-1 angiotensin II receptor (AGTR1).